Consider the following 325-residue polypeptide: Hexaprenyl-diphosphate synthase large subunit ((2E,6E)-farnesyl-diphosphate specific) (325 aa).

Positions 45, 48, and 77 each coordinate isopentenyl diphosphate. All-trans-hexaprenyl diphosphate contacts are provided by D84, D88, and R93. Mg(2+) is bound by residues D84 and D88. An isopentenyl diphosphate-binding site is contributed by R94. Residues K170, T171, and Q208 each contribute to the all-trans-hexaprenyl diphosphate site.

The protein belongs to the FPP/GGPP synthase family. In terms of assembly, dimer of heterodimer or heterotetramer composed of a small (Hexs-a) and large (Hexs-B) subunit. Mg(2+) serves as cofactor.

The enzyme catalyses 3 isopentenyl diphosphate + (2E,6E)-farnesyl diphosphate = all-trans-hexaprenyl diphosphate + 3 diphosphate. Its function is as follows. Catalyzes the condensation of three molecules of isopentenyl diphosphate with farnesyl diphosphate (FPP) to yield (all-E)-hexaprenyl diphosphate (HexPP; C30), the precursor of the prenyl side chain of menaquinone-6. Large subunit Hexs-B catalyzes the condensation reaction and the final product chain length is cooperatively regulated by both the Hexs-A and Hexs-B subunits using the whole size of the hydrophobic cleft as a ruler. The polypeptide is Hexaprenyl-diphosphate synthase large subunit ((2E,6E)-farnesyl-diphosphate specific) (hexs-b) (Micrococcus luteus (Micrococcus lysodeikticus)).